We begin with the raw amino-acid sequence, 105 residues long: MAESPFKADIERAQKELSEKMTPGAIVYIPGSSVINKTGSWRVFKPEFNRDKCVRCYLCYIYCPEPAIYLDEEGYPVFDYDYCKGCGICANECPTKAIEMVREVK.

2 4Fe-4S ferredoxin-type domains span residues 44–73 (FKPE…LDEE) and 74–103 (GYPV…MVRE). Residues Cys53, Cys56, Cys59, Cys63, Cys83, Cys86, Cys89, and Cys93 each coordinate [4Fe-4S] cluster.

Heterotetramer of one alpha, one beta, one delta and one gamma chain. The cofactor is [4Fe-4S] cluster.

This Pyrococcus furiosus (strain ATCC 43587 / DSM 3638 / JCM 8422 / Vc1) protein is Pyruvate synthase subunit PorD (porD).